Consider the following 373-residue polypeptide: Spermidine/putrescine import ATP-binding protein PotA (373 aa).

Residues 5 to 235 (IVFEHVSKKF…PKSSFVADFI (231 aa)) enclose the ABC transporter domain. An ATP-binding site is contributed by 37 to 44 (GPSGCGKT).

The protein belongs to the ABC transporter superfamily. Spermidine/putrescine importer (TC 3.A.1.11.1) family. As to quaternary structure, the complex is composed of two ATP-binding proteins (PotA), two transmembrane proteins (PotB and PotC) and a solute-binding protein (PotD).

The protein resides in the cell inner membrane. It carries out the reaction ATP + H2O + polyamine-[polyamine-binding protein]Side 1 = ADP + phosphate + polyamineSide 2 + [polyamine-binding protein]Side 1.. Functionally, part of the ABC transporter complex PotABCD involved in spermidine/putrescine import. Responsible for energy coupling to the transport system. This Protochlamydia amoebophila (strain UWE25) protein is Spermidine/putrescine import ATP-binding protein PotA.